We begin with the raw amino-acid sequence, 387 residues long: Protein phosphatase 2C 50 (387 aa).

The PPM-type phosphatase domain maps to 60 to 377 (VWGCASTRGR…DNITVIVVDL (318 aa)). Mn(2+) is bound by residues Asp-118 and Gly-119. The short motif at 264-268 (VSGIL) is the Modulates binding affinity to PYR/PYL/RCAR abscisic acid intracellular receptors element. The Mn(2+) site is built by Asp-306 and Asp-368.

It belongs to the PP2C family. As to quaternary structure, interacts with PYL3, PYL5, PYL9 and PYL10. Binding to PYL3, PYL5, PYL9 and PYL10 is dependent on the presence of abscisic acid (ABA). Interacts with SAPK10. Requires Mg(2+) as cofactor. The cofactor is Mn(2+).

The enzyme catalyses O-phospho-L-seryl-[protein] + H2O = L-seryl-[protein] + phosphate. The catalysed reaction is O-phospho-L-threonyl-[protein] + H2O = L-threonyl-[protein] + phosphate. Protein phosphatase involved in abscisic acid (ABA) signaling. Together with PYL3 and SAPK10, may form an ABA signaling module involved in stress response. This Oryza sativa subsp. japonica (Rice) protein is Protein phosphatase 2C 50.